Consider the following 126-residue polypeptide: UPF0102 protein P9303_16141 (126 aa).

The protein belongs to the UPF0102 family.

The protein is UPF0102 protein P9303_16141 of Prochlorococcus marinus (strain MIT 9303).